Consider the following 156-residue polypeptide: Snaclec jerdonibitin subunit alpha (156 aa).

The signal sequence occupies residues 1–23 (MGRFIFVSFGLLVVFLSLSGTGA). 3 disulfides stabilise this stretch: cysteine 25/cysteine 36, cysteine 53/cysteine 150, and cysteine 125/cysteine 142. Residues 32 to 151 (FRQYCYRVFK…CGQQHLFMCK (120 aa)) form the C-type lectin domain.

Belongs to the snaclec family. Heterodimer of subunits alpha and beta; disulfide-linked. Expressed by the venom gland.

Its subcellular location is the secreted. Its function is as follows. Snaclec that dose-dependently inhibits platelet aggregation induced by ristocetin or low-dose thrombin, but not by high-dose thrombin. Binds to GPIbalpha (GP1BA). In vivo, also dose-dependently induces thrombocytopenia of mice and platelet counts remains at very low level even after 18 hours intravenous injection. The polypeptide is Snaclec jerdonibitin subunit alpha (Protobothrops jerdonii (Jerdon's pitviper)).